Consider the following 303-residue polypeptide: Putative S-adenosyl-L-methionine-dependent methyltransferase MAB_0213c (303 aa).

S-adenosyl-L-methionine contacts are provided by residues aspartate 126 and 155–156 (DL).

Belongs to the UPF0677 family.

Exhibits S-adenosyl-L-methionine-dependent methyltransferase activity. This Mycobacteroides abscessus (strain ATCC 19977 / DSM 44196 / CCUG 20993 / CIP 104536 / JCM 13569 / NCTC 13031 / TMC 1543 / L948) (Mycobacterium abscessus) protein is Putative S-adenosyl-L-methionine-dependent methyltransferase MAB_0213c.